A 761-amino-acid chain; its full sequence is Elongation factor G, mitochondrial (761 aa).

The N-terminal 33 residues, 1–33 (MTSVLRGVLKTHLPRTLTLPRCARNFQTTTFLR), are a transit peptide targeting the mitochondrion. The tr-type G domain maps to 66–347 (TRLRNIGISA…SVVDYLPQPN (282 aa)). GTP contacts are provided by residues 75-82 (AHIDSGKT), 146-150 (DTPGH), and 200-203 (NKMD).

The protein belongs to the TRAFAC class translation factor GTPase superfamily. Classic translation factor GTPase family. EF-G/EF-2 subfamily.

It is found in the mitochondrion. Its pathway is protein biosynthesis; polypeptide chain elongation. Its function is as follows. Mitochondrial GTPase that catalyzes the GTP-dependent ribosomal translocation step during translation elongation. During this step, the ribosome changes from the pre-translocational (PRE) to the post-translocational (POST) state as the newly formed A-site-bound peptidyl-tRNA and P-site-bound deacylated tRNA move to the P and E sites, respectively. Catalyzes the coordinated movement of the two tRNA molecules, the mRNA and conformational changes in the ribosome. This is Elongation factor G, mitochondrial from Candida dubliniensis (strain CD36 / ATCC MYA-646 / CBS 7987 / NCPF 3949 / NRRL Y-17841) (Yeast).